Reading from the N-terminus, the 287-residue chain is Polyamine aminopropyltransferase (287 aa).

Residues 5–238 (EIWYETLHAN…GIMTFAWASN (234 aa)) form the PABS domain. Position 33 (glutamine 33) interacts with S-methyl-5'-thioadenosine. Histidine 64 and aspartate 88 together coordinate spermidine. S-methyl-5'-thioadenosine is bound by residues glutamate 108 and 140–141 (DG). Aspartate 158 functions as the Proton acceptor in the catalytic mechanism. 158–161 (DCTD) contributes to the spermidine binding site. Proline 165 contacts S-methyl-5'-thioadenosine.

It belongs to the spermidine/spermine synthase family. As to quaternary structure, homodimer or homotetramer.

Its subcellular location is the cytoplasm. The catalysed reaction is S-adenosyl 3-(methylsulfanyl)propylamine + putrescine = S-methyl-5'-thioadenosine + spermidine + H(+). It functions in the pathway amine and polyamine biosynthesis; spermidine biosynthesis; spermidine from putrescine: step 1/1. Functionally, catalyzes the irreversible transfer of a propylamine group from the amino donor S-adenosylmethioninamine (decarboxy-AdoMet) to putrescine (1,4-diaminobutane) to yield spermidine. The chain is Polyamine aminopropyltransferase from Pectobacterium atrosepticum (strain SCRI 1043 / ATCC BAA-672) (Erwinia carotovora subsp. atroseptica).